A 159-amino-acid polypeptide reads, in one-letter code: Galactose-specific lectin nattectin (159 aa).

A signal peptide spans 1–21 (MASVPHFTVFLFLACALGIGA). The propeptide occupies 22–24 (NVT). Intrachain disulfides connect Cys31–Cys42, Cys59–Cys155, and Cys132–Cys147. The region spanning 38-156 (HGSRCFTFHR…CKVKRSFLCA (119 aa)) is the C-type lectin domain. 4 residues coordinate Ca(2+): Gln122, Asp124, Glu130, and Asn143. The Galactose-binding motif lies at 122–124 (QPD).

Monomer. Not glycosylated. In terms of tissue distribution, expressed by the venom gland.

The protein localises to the secreted. Its function is as follows. Galactose specific lectin that exhibits hemagglutination activity (minimum hemagluttination concentration = 2.5 ug/well) in a calcium-independent fashion. Has remarkable pro-inflammatory activity, inducing neutrophil mobilization in mice. Plays a crucial role in the innate immune system and chronic manifestations, especially in neutrophil mobilization. The chain is Galactose-specific lectin nattectin from Thalassophryne nattereri (Copper Joe toadfish).